A 954-amino-acid chain; its full sequence is Glycine dehydrogenase (decarboxylating) (954 aa).

N6-(pyridoxal phosphate)lysine is present on Lys702.

It belongs to the GcvP family. As to quaternary structure, the glycine cleavage system is composed of four proteins: P, T, L and H. Pyridoxal 5'-phosphate is required as a cofactor.

The catalysed reaction is N(6)-[(R)-lipoyl]-L-lysyl-[glycine-cleavage complex H protein] + glycine + H(+) = N(6)-[(R)-S(8)-aminomethyldihydrolipoyl]-L-lysyl-[glycine-cleavage complex H protein] + CO2. The glycine cleavage system catalyzes the degradation of glycine. The P protein binds the alpha-amino group of glycine through its pyridoxal phosphate cofactor; CO(2) is released and the remaining methylamine moiety is then transferred to the lipoamide cofactor of the H protein. The protein is Glycine dehydrogenase (decarboxylating) of Xanthomonas euvesicatoria pv. vesicatoria (strain 85-10) (Xanthomonas campestris pv. vesicatoria).